We begin with the raw amino-acid sequence, 902 residues long: MLATPGALHHLLLLPPPPHTQLAFHHAVGGVPAALLPLPRPRRVAASASTSRRGGARRRAAGARVRASVGEEAPPVVTEEASTSGGPTKFSTKIPVGDRHILVETGHIGRQASASVMVTDGETIVYSSVCLADTPNDPSDFFPMSVHYQERLSAAGRTSGGFFKREGRAKDHEVLVCRLIDRPLRPTMPKGFYYETQILSWVFSYDGIHSPDSLAITAAGVAMALSEVPNKQTIAGVRVGMINDQFVVNPTTEQMDDSELDLVMAGTDSAILMIEGYCDFLTEEKLLQAVETGQGAIREICKAIDGLVQKCGKKKMFDAIDLPPPELYRHVEDISGDELVKALQIKEKILRRKALSALEEKVITILSEQGYVAKDESSGVSENLADVIEEEDEDEVIVDGEVDEGEVHIKPVSRKPPRQLFSEVDVKLVFKEVSSKFLRRRIVEGGKRSDGRSPCELRPINSQCGLLPRAHGSALFTRGETQALAVVTLGDYQMAQRIDNLVDTEESKSFYLQYTFPPSSVGEVGRIGAPNRREIGHGMLAERALEPILPPEEDFPYTIRVESTITESNGSSSMASVCGGCLALQDAGVPIKFPVAGIAMGLVLDTLEFGGDGKPLILSDITGAEDASGDMDFKVAGNENGISAFQMDIKVVGITLPIMEHALLQARDGRKHILNEMSKCSPPPAKVLSPYAPLIHVMKVKPNKVNLIIGSGGKTIKSIIEETGVDAIDTGDDGTVKITARDLSSLEKSKAIIANLTMVPKVGEIYRNCEIKTIAPYGAFVEIAPGREGLCHISELSSSWLAKAEDAFKVGDRIDVKLIEINDKGQLRLSSRALLPDANQESSSKQQAGGSTREKAPQKDNLVKMTTRRPRRKKQAEASTAENNATASPKDLASQGSEMGTE.

The N-terminal 66 residues, 1–66, are a transit peptide targeting the chloroplast; the sequence is MLATPGALHH…RRRAAGARVR (66 aa). Residues 44–53 show a composition bias toward low complexity; sequence VAASASTSRR. Residues 44-93 form a disordered region; that stretch reads VAASASTSRRGGARRRAAGARVRASVGEEAPPVVTEEASTSGGPTKFSTK. Polar residues predominate over residues 80-91; sequence EASTSGGPTKFS. One can recognise a KH domain in the interval 693–753; sequence PLIHVMKVKP…SSLEKSKAII (61 aa). The S1 motif domain maps to 763-832; sequence GEIYRNCEIK…DKGQLRLSSR (70 aa). Residues 833–902 form a disordered region; that stretch reads ALLPDANQES…ASQGSEMGTE (70 aa). Polar residues predominate over residues 839–850; it reads NQESSSKQQAGG. Basic and acidic residues predominate over residues 852-862; the sequence is TREKAPQKDNL. The segment covering 877–888 has biased composition (low complexity); it reads EASTAENNATAS.

It belongs to the polyribonucleotide nucleotidyltransferase family.

Its subcellular location is the plastid. It localises to the chloroplast. The catalysed reaction is RNA(n+1) + phosphate = RNA(n) + a ribonucleoside 5'-diphosphate. Its function is as follows. Involved in the metabolism of all major classes of plastid RNAs. Required for efficient 3'-end processing of mRNAs and 3'-end maturation of rRNA transcripts, but is not sufficient to mediate their degradation. Mediates tRNA degradation. May function as a poly(A) mRNA 3'-5' degrading phosphorylase. This Oryza sativa subsp. japonica (Rice) protein is Probable polyribonucleotide nucleotidyltransferase 1, chloroplastic (PNP1).